The following is a 240-amino-acid chain: UDP-2,3-diacylglucosamine hydrolase (240 aa).

The Mn(2+) site is built by Asp8, His10, Asp41, Asn79, and His114. 79-80 provides a ligand contact to substrate; sequence NR. Asp122, Ser160, Thr164, Lys167, and His195 together coordinate substrate. His195 and His197 together coordinate Mn(2+).

The protein belongs to the LpxH family. It depends on Mn(2+) as a cofactor.

The protein localises to the cell inner membrane. The catalysed reaction is UDP-2-N,3-O-bis[(3R)-3-hydroxytetradecanoyl]-alpha-D-glucosamine + H2O = 2-N,3-O-bis[(3R)-3-hydroxytetradecanoyl]-alpha-D-glucosaminyl 1-phosphate + UMP + 2 H(+). The protein operates within glycolipid biosynthesis; lipid IV(A) biosynthesis; lipid IV(A) from (3R)-3-hydroxytetradecanoyl-[acyl-carrier-protein] and UDP-N-acetyl-alpha-D-glucosamine: step 4/6. In terms of biological role, hydrolyzes the pyrophosphate bond of UDP-2,3-diacylglucosamine to yield 2,3-diacylglucosamine 1-phosphate (lipid X) and UMP by catalyzing the attack of water at the alpha-P atom. Involved in the biosynthesis of lipid A, a phosphorylated glycolipid that anchors the lipopolysaccharide to the outer membrane of the cell. The sequence is that of UDP-2,3-diacylglucosamine hydrolase from Pseudomonas aeruginosa (strain UCBPP-PA14).